We begin with the raw amino-acid sequence, 618 residues long: DNA mismatch repair protein MutL (618 aa).

It belongs to the DNA mismatch repair MutL/HexB family.

Functionally, this protein is involved in the repair of mismatches in DNA. It is required for dam-dependent methyl-directed DNA mismatch repair. May act as a 'molecular matchmaker', a protein that promotes the formation of a stable complex between two or more DNA-binding proteins in an ATP-dependent manner without itself being part of a final effector complex. This chain is DNA mismatch repair protein MutL, found in Porphyromonas gingivalis (strain ATCC 33277 / DSM 20709 / CIP 103683 / JCM 12257 / NCTC 11834 / 2561).